A 465-amino-acid polypeptide reads, in one-letter code: UDP-N-acetylmuramoylalanine--D-glutamate ligase (465 aa).

ATP is bound at residue 127-133 (GSNGKST).

It belongs to the MurCDEF family.

The protein localises to the cytoplasm. It carries out the reaction UDP-N-acetyl-alpha-D-muramoyl-L-alanine + D-glutamate + ATP = UDP-N-acetyl-alpha-D-muramoyl-L-alanyl-D-glutamate + ADP + phosphate + H(+). The protein operates within cell wall biogenesis; peptidoglycan biosynthesis. In terms of biological role, cell wall formation. Catalyzes the addition of glutamate to the nucleotide precursor UDP-N-acetylmuramoyl-L-alanine (UMA). The polypeptide is UDP-N-acetylmuramoylalanine--D-glutamate ligase (Cereibacter sphaeroides (strain ATCC 17029 / ATH 2.4.9) (Rhodobacter sphaeroides)).